A 175-amino-acid polypeptide reads, in one-letter code: uncharacterized protein (175 aa).

The N-terminal 11 residues, 1 to 11 (METWRKGSFRN), are a transit peptide targeting the mitochondrion. The tract at residues 29–48 (QGSILSQASTAGGDHEEYSN) is disordered.

The protein resides in the mitochondrion. This is an uncharacterized protein from Mus musculus (Mouse).